The chain runs to 95 residues: YcgL domain-containing protein Patl_2802 (95 aa).

The 85-residue stretch at 4–88 (LLCAVYKSSK…PEENLLKQHL (85 aa)) folds into the YcgL domain.

In Pseudoalteromonas atlantica (strain T6c / ATCC BAA-1087), this protein is YcgL domain-containing protein Patl_2802.